The sequence spans 406 residues: Phosphorylase b kinase gamma catalytic chain, liver/testis isoform (406 aa).

The Protein kinase domain occupies 24 to 291; the sequence is YDPKDIIGRG…AEQALQHPFF (268 aa). ATP-binding positions include 30–38 and Lys-53; that span reads IGRGVSSVV. Asp-153 acts as the Proton acceptor in catalysis. Positions 306 to 330 are calmodulin-binding (domain-N); the sequence is QRFRVAVWTILAAGRVALSSHRLRP. Residues 346-370 are calmodulin-binding (domain-C); that stretch reads VRRLIDNCAFRLYGHWVKKGEQQNR.

This sequence belongs to the protein kinase superfamily. CAMK Ser/Thr protein kinase family. Hexadecamer of 4 heterotetramers, each composed of alpha, beta, gamma, and delta subunits. Alpha (PHKA1 or PHKA2) and beta (PHKB) are regulatory subunits, gamma (PHKG1 or PHKG2) is the catalytic subunit, and delta is calmodulin.

It catalyses the reaction 2 ATP + phosphorylase b = 2 ADP + phosphorylase a.. Catalytic subunit of the phosphorylase b kinase (PHK), which mediates the neural and hormonal regulation of glycogen breakdown (glycogenolysis) by phosphorylating and thereby activating glycogen phosphorylase. May regulate glycogeneolysis in the testis. In vitro, phosphorylates PYGM. This is Phosphorylase b kinase gamma catalytic chain, liver/testis isoform (Phkg2) from Rattus norvegicus (Rat).